A 145-amino-acid polypeptide reads, in one-letter code: Histone H3-like centromeric protein A (145 aa).

Basic residues predominate over residues 1-19 (MPRHTSAHKRKPSTPRRRS). Positions 1 to 54 (MPRHTSAHKRKPSTPRRRSPPASLPPPAGSRTRRHSGPSGSSPRKKHKFRPGTR) are disordered. At Ser19 the chain carries Phosphoserine. Positions 51 to 145 (PGTRALMEIR…ARRIRGVEHM (95 aa)) are H3-like.

This sequence belongs to the histone H3 family. In terms of assembly, component of centromeric nucleosomes, where DNA is wrapped around a histone octamer core. The octamer contains two molecules each of H2A, H2B, CENPA and H4 assembled in one CENPA-H4 heterotetramer and two H2A-H2B heterodimers. CENPA modulates the DNA-binding characteristics of nucleosomes so that protruding DNA ends have higher flexibility than in nucleosomes containing conventional histone H3.

It is found in the nucleus. It localises to the chromosome. Its subcellular location is the centromere. In terms of biological role, histone H3-like nucleosomal protein that is specifically found in centromeric nucleosomes. Replaces conventional H3 in the nucleosome core of centromeric chromatin that serves as an assembly site for the inner kinetochore. The presence of CENPA subtly modifies the nucleosome structure and the way DNA is wrapped around the nucleosome and gives rise to protruding DNA ends that are less well-ordered and rigid compared to nucleosomes containing histone H3. May serve as an epigenetic mark that propagates centromere identity through replication and cell division. Required for recruitment and assembly of kinetochore proteins, and as a consequence required for progress through mitosis, chromosome segregation and cytokinesis. The polypeptide is Histone H3-like centromeric protein A (cenpa) (Danio rerio (Zebrafish)).